A 149-amino-acid polypeptide reads, in one-letter code: Large ribosomal subunit protein uL15 (149 aa).

The interval methionine 1–glycine 53 is disordered. Residues threonine 23 to histidine 35 are compositionally biased toward gly residues. The span at lysine 36–lysine 47 shows a compositional bias: basic residues.

The protein belongs to the universal ribosomal protein uL15 family. Part of the 50S ribosomal subunit.

Its function is as follows. Binds to the 23S rRNA. The sequence is that of Large ribosomal subunit protein uL15 from Coprothermobacter proteolyticus (strain ATCC 35245 / DSM 5265 / OCM 4 / BT).